The chain runs to 263 residues: H-2 class II histocompatibility antigen, A-U beta chain (263 aa).

The signal sequence occupies residues 1 to 27; the sequence is MALQIPSLLLLAAVVVLMVLSSPGTEG. The segment at 28–120 is beta-1; sequence GDSERHFVVQ…TEVPTSLRRL (93 aa). Topologically, residues 28–224 are extracellular; that stretch reads GDSERHFVVQ…RAQSESARSK (197 aa). Intrachain disulfides connect cysteine 42-cysteine 104 and cysteine 143-cysteine 199. N-linked (GlcNAc...) asparagine glycosylation occurs at asparagine 46. A beta-2 region spans residues 121–214; sequence EQPNVVISLS…SLKSPITVEW (94 aa). Residues 123-211 form the Ig-like C1-type domain; that stretch reads PNVVISLSRT…EHPSLKSPIT (89 aa). A connecting peptide region spans residues 215-224; that stretch reads RAQSESARSK. A helical membrane pass occupies residues 225–245; sequence MLSGIGGCVLGVIFLGLGLFI. Topologically, residues 246–263 are cytoplasmic; it reads RHRSQKGPRGPPPAGLLQ.

Belongs to the MHC class II family.

It is found in the membrane. The chain is H-2 class II histocompatibility antigen, A-U beta chain from Mus musculus (Mouse).